Consider the following 206-residue polypeptide: Guanylate kinase (206 aa).

Residues 5–183 enclose the Guanylate kinase-like domain; sequence GNLFVVAAPS…AVFDLKTIVH (179 aa). 12–19 is a binding site for ATP; the sequence is APSGAGKS.

This sequence belongs to the guanylate kinase family.

It localises to the cytoplasm. It catalyses the reaction GMP + ATP = GDP + ADP. In terms of biological role, essential for recycling GMP and indirectly, cGMP. This Polaromonas sp. (strain JS666 / ATCC BAA-500) protein is Guanylate kinase.